The chain runs to 207 residues: Ribonuclease HII (207 aa).

Residues 12–201 form the RNase H type-2 domain; sequence DLVAGVDEVG…VRAAWEVREG (190 aa). A divalent metal cation is bound by residues Asp18, Glu19, and Asp110.

The protein belongs to the RNase HII family. Requires Mn(2+) as cofactor. It depends on Mg(2+) as a cofactor.

The protein resides in the cytoplasm. The enzyme catalyses Endonucleolytic cleavage to 5'-phosphomonoester.. In terms of biological role, endonuclease that specifically degrades the RNA of RNA-DNA hybrids. The chain is Ribonuclease HII from Pseudomonas putida (strain ATCC 700007 / DSM 6899 / JCM 31910 / BCRC 17059 / LMG 24140 / F1).